The chain runs to 227 residues: PKHD-type hydroxylase PHZ_c0292 (227 aa).

Residues 78 to 178 (VVFPPLFNRY…RVCSFFWIQS (101 aa)) form the Fe2OG dioxygenase domain. Residues His96, Asp98, and His159 each coordinate Fe cation. A 2-oxoglutarate-binding site is contributed by Arg169.

Fe(2+) is required as a cofactor. Requires L-ascorbate as cofactor.

The chain is PKHD-type hydroxylase PHZ_c0292 from Phenylobacterium zucineum (strain HLK1).